The chain runs to 128 residues: LIM domain-containing protein 2 (128 aa).

Methionine 1 is modified (N-acetylmethionine). A disordered region spans residues 1–25 (MFQAAGAAQATPSHEAKGSSGSSTV). The LIM zinc-binding domain maps to 39–99 (ETCAACQKTV…RPHFQQLFKS (61 aa)). The Zn(2+) site is built by cysteine 41, cysteine 44, histidine 62, cysteine 65, cysteine 68, cysteine 71, cysteine 89, and histidine 92.

Interacts with ILK.

The protein resides in the cytoplasm. It localises to the nucleus. Acts as an activator of the protein-kinase ILK, thereby regulating cell motility. This Mus musculus (Mouse) protein is LIM domain-containing protein 2.